The sequence spans 383 residues: Odorant receptor 94b (383 aa).

The Cytoplasmic segment spans residues Met-1–Tyr-41. Residues Pro-42 to Ile-62 traverse the membrane as a helical segment. Residues Thr-63 to Ala-70 lie on the Extracellular side of the membrane. A helical transmembrane segment spans residues Gly-71–Trp-91. Residues Tyr-92 to Arg-130 are Cytoplasmic-facing. Residues Ile-131 to Phe-151 traverse the membrane as a helical segment. Topologically, residues Phe-152 to Tyr-174 are extracellular. A helical membrane pass occupies residues Phe-175–Leu-195. Topologically, residues Asp-196–Glu-250 are cytoplasmic. A helical transmembrane segment spans residues Val-251 to Ser-271. Over Ala-272 to Pro-284 the chain is Extracellular. The chain crosses the membrane as a helical span at residues Gly-285 to Cys-305. At Tyr-306 to Glu-358 the chain is on the cytoplasmic side. The helical transmembrane segment at Ile-359 to Leu-379 threads the bilayer. Topologically, residues Lys-380–Lys-383 are extracellular.

Belongs to the insect chemoreceptor superfamily. Heteromeric odorant receptor channel (TC 1.A.69) family. Or2a subfamily. Interacts with Orco. Complexes exist early in the endomembrane system in olfactory sensory neurons (OSNs), coupling these complexes to the conserved ciliary trafficking pathway.

It localises to the cell membrane. Functionally, odorant receptor which mediates acceptance or avoidance behavior, depending on its substrates. The odorant receptor repertoire encodes a large collection of odor stimuli that vary widely in identity, intensity, and duration. May form a complex with Orco to form odorant-sensing units, providing sensitive and prolonged odorant signaling and calcium permeability. In Drosophila melanogaster (Fruit fly), this protein is Odorant receptor 94b (Or94b).